The following is a 339-amino-acid chain: HTH-type transcriptional regulator KdgR (339 aa).

Positions Thr9–Ile64 constitute an HTH lacI-type domain. The segment at residues Ile11–Asn30 is a DNA-binding region (H-T-H motif).

Its function is as follows. Transcriptional repressor of the kdgRKAT and kduID operons for pectin utilization. This is HTH-type transcriptional regulator KdgR (kdgR) from Bacillus subtilis (strain 168).